The sequence spans 140 residues: Large ribosomal subunit protein uL11 (140 aa).

It belongs to the universal ribosomal protein uL11 family. Part of the ribosomal stalk of the 50S ribosomal subunit. Interacts with L10 and the large rRNA to form the base of the stalk. L10 forms an elongated spine to which L12 dimers bind in a sequential fashion forming a multimeric L10(L12)X complex. One or more lysine residues are methylated.

Its function is as follows. Forms part of the ribosomal stalk which helps the ribosome interact with GTP-bound translation factors. This is Large ribosomal subunit protein uL11 from Syntrophobacter fumaroxidans (strain DSM 10017 / MPOB).